The chain runs to 242 residues: UPF0273 protein TM_0370 (242 aa).

The KaiC domain maps to 3–242; the sequence is KRVKTGIPGM…IYPSEGGEGR (240 aa). Residue 30–37 coordinates ATP; sequence GGPGTGKT.

The protein belongs to the UPF0273 family.

The polypeptide is UPF0273 protein TM_0370 (Thermotoga maritima (strain ATCC 43589 / DSM 3109 / JCM 10099 / NBRC 100826 / MSB8)).